A 285-amino-acid chain; its full sequence is Golgi to ER traffic protein 2 (285 aa).

Positions 1-10 are enriched in basic and acidic residues; sequence MSELTEAEKR. The tract at residues 1–71 is disordered; that stretch reads MSELTEAEKR…HSATPDIKED (71 aa). Ser2 is modified (N-acetylserine). Over 2-148 the chain is Cytoplasmic; that stretch reads SELTEAEKRR…LDYHDYLLNR (147 aa). The segment covering 11–20 has biased composition (basic residues); the sequence is RLLRERRQKK. Residues 24–42 show a composition bias toward polar residues; it reads GGASSRLNKITGQASSHLN. Ser45 is subject to Phosphoserine. Over residues 49–60 the composition is skewed to low complexity; the sequence is APSAAKATPPAS. The chain crosses the membrane as a helical span at residues 149 to 169; sequence LKAWTILVKWVFFLLPYLYLI. Residues 170 to 196 lie on the Lumenal side of the membrane; it reads TRPNSSVWPAYAFTQSAWFAPLRNPSN. Residues Asn173 and Asn196 are each glycosylated (N-linked (GlcNAc...) asparagine). The chain crosses the membrane as a helical span at residues 197–216; it reads FTRIFATFEFLSISIYYQLL. Topologically, residues 217 to 263 are cytoplasmic; it reads KNVEHKSKIKNLQDTNKLVKLVSLVPEGVIPVANLKGKLITLLQYWD. Residues 264–284 form a helical membrane-spanning segment; that stretch reads LLSMLITDISFVLIVLGLLTY. Leu285 is a topological domain (lumenal).

Belongs to the GET2 family. Component of the Golgi to ER traffic (GET) complex, which is composed of GET1, GET2 and GET3. Within the complex, GET1 and GET2 form a heterotetramer which is stabilized by phosphatidylinositol binding and which binds to the GET3 homodimer.

Its subcellular location is the endoplasmic reticulum membrane. The protein resides in the golgi apparatus membrane. Required for the post-translational delivery of tail-anchored (TA) proteins to the endoplasmic reticulum. Together with GET1, acts as a membrane receptor for soluble GET3, which recognizes and selectively binds the transmembrane domain of TA proteins in the cytosol. The GET complex cooperates with the HDEL receptor ERD2 to mediate the ATP-dependent retrieval of resident ER proteins that contain a C-terminal H-D-E-L retention signal from the Golgi to the ER. Involved in DNA replication and DNA damage response and also in cell wall function. This Saccharomyces cerevisiae (strain YJM789) (Baker's yeast) protein is Golgi to ER traffic protein 2.